We begin with the raw amino-acid sequence, 179 residues long: MASHIGKLPIAIPAGVEVKIEGQNFSAKGAKGSDSYVVPEGITAAVEGNEIVLTAADDLRPTRAKHGLARSIMAGMVKGVHDGYSKTLEIVGTGYRAVAKGQGIEFFLGYSHTITVNPPEGITLKVTDANHVVVEGTDKQVVGQVAANIRKLRAPEPYKGKGIKYSDERILRKAGKAGK.

This sequence belongs to the universal ribosomal protein uL6 family. In terms of assembly, part of the 50S ribosomal subunit.

In terms of biological role, this protein binds to the 23S rRNA, and is important in its secondary structure. It is located near the subunit interface in the base of the L7/L12 stalk, and near the tRNA binding site of the peptidyltransferase center. The chain is Large ribosomal subunit protein uL6 from Bifidobacterium longum (strain DJO10A).